Reading from the N-terminus, the 128-residue chain is Fluoride-specific ion channel FluC (128 aa).

The next 4 membrane-spanning stretches (helical) occupy residues 3–23, 33–53, 69–89, and 99–119; these read LYALTAIGAGAALGAWLRWWF, TLPLGTLAANLTGGYLIGAAI, FAITGFLGGLTTFSTFSAETV, and WTFVIIFSHLTGSLVMTILGI. Glycine 76 and threonine 79 together coordinate Na(+).

It belongs to the fluoride channel Fluc/FEX (TC 1.A.43) family.

The protein resides in the cell inner membrane. It catalyses the reaction fluoride(in) = fluoride(out). Na(+) is not transported, but it plays an essential structural role and its presence is essential for fluoride channel function. Its function is as follows. Fluoride-specific ion channel. Important for reducing fluoride concentration in the cell, thus reducing its toxicity. This Nitrosospira multiformis (strain ATCC 25196 / NCIMB 11849 / C 71) protein is Fluoride-specific ion channel FluC.